A 163-amino-acid chain; its full sequence is MAPQNMPAVSIDINMFWQIINFLILMFFFKKYFQKPISKVLDARKEKIANELKQAEIDREMAAKANEETQGILKAARTEANEILLRAEKKADDRKEAILKEANSQREKTIKSAELEVEKMKKQARKELQSEVTALAVNLAEKMINEKLDSKLGANLLNVLLKR.

Residues 9–29 traverse the membrane as a helical segment; the sequence is VSIDINMFWQIINFLILMFFF.

This sequence belongs to the ATPase B chain family. In terms of assembly, F-type ATPases have 2 components, F(1) - the catalytic core - and F(0) - the membrane proton channel. F(1) has five subunits: alpha(3), beta(3), gamma(1), delta(1), epsilon(1). F(0) has three main subunits: a(1), b(2) and c(10-14). The alpha and beta chains form an alternating ring which encloses part of the gamma chain. F(1) is attached to F(0) by a central stalk formed by the gamma and epsilon chains, while a peripheral stalk is formed by the delta and b chains.

The protein resides in the cell inner membrane. F(1)F(0) ATP synthase produces ATP from ADP in the presence of a proton or sodium gradient. F-type ATPases consist of two structural domains, F(1) containing the extramembraneous catalytic core and F(0) containing the membrane proton channel, linked together by a central stalk and a peripheral stalk. During catalysis, ATP synthesis in the catalytic domain of F(1) is coupled via a rotary mechanism of the central stalk subunits to proton translocation. Functionally, component of the F(0) channel, it forms part of the peripheral stalk, linking F(1) to F(0). This is ATP synthase subunit b, sodium ion specific (atpF) from Ilyobacter tartaricus.